Here is a 59-residue protein sequence, read N- to C-terminus: Small ribosomal subunit protein bS21 (59 aa).

Residues 34–59 (KHEHYEKPSVKRKKKSEAARRRKRSF) form a disordered region. The span at 43 to 59 (VKRKKKSEAARRRKRSF) shows a compositional bias: basic residues.

It belongs to the bacterial ribosomal protein bS21 family.

This is Small ribosomal subunit protein bS21 from Desulforudis audaxviator (strain MP104C).